The sequence spans 443 residues: KH domain-containing, RNA-binding, signal transduction-associated protein 1 (443 aa).

Residues 1–95 (MQRRDDPAAR…LLPPSATAAA (95 aa)) are disordered. Phosphoserine is present on residues Ser18 and Ser20. Lys21 carries the post-translational modification N6-acetyllysine. Ser29 carries the post-translational modification Phosphoserine. Thr33 is subject to Phosphothreonine. 2 positions are modified to asymmetric dimethylarginine; by PRMT1: Arg45 and Arg52. Ser58 carries the phosphoserine modification. Positions 61-72 (TQPPPLLPPSNP) are enriched in pro residues. Residues 81-95 (SAPTPLLPPSATAAA) show a composition bias toward low complexity. Thr84 is modified (phosphothreonine; by MAPK1). Residues Lys96 and Lys102 each participate in a glycyl lysine isopeptide (Lys-Gly) (interchain with G-Cter in SUMO2) cross-link. The involved in homodimerization stretch occupies residues 100–260 (ENKYLPELMA…VKKFLVPDMM (161 aa)). Ser113 carries the phosphoserine modification. A Glycyl lysine isopeptide (Lys-Gly) (interchain with G-Cter in SUMO2) cross-link involves residue Lys139. Ser150 bears the Phosphoserine mark. Positions 171 to 197 (NFVGKILGPQGNTIKRLQEETGAKISV) constitute a KH domain. Residue Lys175 is modified to N6-acetyllysine; alternate. Residue Lys175 forms a Glycyl lysine isopeptide (Lys-Gly) (interchain with G-Cter in SUMO2); alternate linkage. At Thr183 the chain carries Phosphothreonine. A disordered region spans residues 280–317 (PSRGRGVSVRGRGAAPPPPPVPRGRGVGPPRGALVRGT). Omega-N-methylarginine occurs at positions 282, 284, and 291. A compositionally biased stretch (low complexity) spans 283–293 (GRGVSVRGRGA). Arg304 bears the Asymmetric dimethylarginine; by PRMT1 mark. The span at 307-316 (GPPRGALVRG) shows a compositional bias: low complexity. An omega-N-methylarginine; by PRMT1 mark is found at Arg310 and Arg315. The residue at position 320 (Arg320) is a Dimethylated arginine; alternate. Arg320 is modified (omega-N-methylarginine; by PRMT1; alternate). Arg325 is subject to Omega-N-methylarginine; by PRMT1. The disordered stretch occupies residues 326-345 (GATVTRGVPPPPTVRGAPTP). Dimethylated arginine; alternate is present on residues Arg331 and Arg340. Omega-N-methylarginine; by PRMT1; alternate is present on residues Arg331 and Arg340. Arg331 is modified (asymmetric dimethylarginine; alternate). The interaction with HNRNPA1 stretch occupies residues 351–443 (GIQRIPLPPT…AYREHPYGRY (93 aa)). Position 387 is a phosphotyrosine (Tyr387). Ser390 is modified (phosphoserine). The tract at residues 400–420 (GHGELQDSYEAYGQDDWNGTR) is interaction with ZBTB7A. The tract at residues 411 to 443 (YGQDDWNGTRPSLKAPPARPVKGAYREHPYGRY) is disordered. Lys432 is covalently cross-linked (Glycyl lysine isopeptide (Lys-Gly) (interchain with G-Cter in SUMO2)). Residues 434–443 (AYREHPYGRY) are compositionally biased toward basic and acidic residues. 3 positions are modified to phosphotyrosine; by PTK6: Tyr435, Tyr440, and Tyr443.

The protein belongs to the KHDRBS family. In terms of assembly, self-associates to form homooligomers when bound to RNA, oligomerization appears to be limited when binding to proteins. Interacts with KHDRBS3/SLIM-2. Forms a trimeric complex in the nucleus consisting of BANP, HDAC6 and KHDRBS1/SAM68; HDAC6 keeps KHDRBS1 in a deacetylated state which inhibits the inclusion of CD44 alternate exons. The complex is disrupted by MAPK1/MAPK3-mediated phosphorylation of BANP which results in BANP export to the cytoplasm. This facilitates acetylation of KHDRBS1 and CD44 variant exon inclusion. Interacts with KHDRBS2/SLIM-1; heterooligomer formation of KHDRBS family proteins may modulate RNA substrate specificity. Interacts with PIK3R1, PLCG1. Interacts with RASA1, GRB2, SRC, CBP, PRMT1, APC, HNRNPA1. Interacts with PTK6 (via SH3 and SH2 domains). Forms a complex with ILF2, ILF3, YLPM1, RBMX, NCOA5 and PPP1CA. Binds WBP4/FBP21 (via WW domains), FNBP4/FBP30 (via WW domains). Interacts (via Arg/Gly-rich-flanked Pro-rich regions) with FYN (via the SH3 domain). Interacts with the non-receptor tyrosine kinase SRMS; the interaction leads to phosphorylation of KHDRBS1. Interacts with ZBTB7A; negatively regulates KHDRBS1 splicing activity toward BCL2L1. In terms of processing, tyrosine phosphorylated by several non-receptor tyrosine kinases including LCK, FYN and JAK3. Also tyrosine phosphorylated by the non-receptor tyrosine kinase SRMS in an EGF-dependent manner. Phosphorylation by PTK6 negatively regulates its RNA binding ability. Phosphorylation by PTK6 at Tyr-440 dictates the nuclear localization of KHDRBS1. Post-translationally, acetylated. Positively correlates with ability to bind RNA. Deacetylated by HDAC6; this regulates alternative splicing by inhibiting the inclusion of CD44 alternate exons. Arginine methylation is required for nuclear localization, Inhibits interaction with Src-like SH3 domains, but not interaction with WW domains of WBP4/FBP21 and FNBP4/FBP30.

It is found in the nucleus. Its subcellular location is the cytoplasm. It localises to the membrane. Its function is as follows. Recruited and tyrosine phosphorylated by several receptor systems, for example the T-cell, leptin and insulin receptors. Once phosphorylated, functions as an adapter protein in signal transduction cascades by binding to SH2 and SH3 domain-containing proteins. Role in G2-M progression in the cell cycle. Represses CBP-dependent transcriptional activation apparently by competing with other nuclear factors for binding to CBP. Also acts as a putative regulator of mRNA stability and/or translation rates and mediates mRNA nuclear export. Positively regulates the association of constitutive transport element (CTE)-containing mRNA with large polyribosomes and translation initiation. May not be involved in the nucleocytoplasmic export of unspliced (CTE)-containing RNA species. RNA-binding protein that plays a role in the regulation of alternative splicing and influences mRNA splice site selection and exon inclusion. Binds to RNA containing 5'-[AU]UAA-3' as a bipartite motif spaced by more than 15 nucleotides. Binds poly(A). Can regulate CD44 alternative splicing in a Ras pathway-dependent manner. In cooperation with HNRNPA1 modulates alternative splicing of BCL2L1 by promoting splicing toward isoform Bcl-X(S), and of SMN1. Can regulate alternative splicing of NRXN1 and NRXN3 in the laminin G-like domain 6 containing the evolutionary conserved neurexin alternative spliced segment 4 (AS4) involved in neurexin selective targeting to postsynaptic partners. In a neuronal activity-dependent manner cooperates synergistically with KHDRBS2/SLIM-1 in regulation of NRXN1 exon skipping at AS4. The cooperation with KHDRBS2/SLIM-1 is antagonistic for regulation of NXRN3 alternative splicing at AS4. The sequence is that of KH domain-containing, RNA-binding, signal transduction-associated protein 1 from Rattus norvegicus (Rat).